Reading from the N-terminus, the 207-residue chain is LexA repressor (207 aa).

Residues Val-33–Asn-52 constitute a DNA-binding region (H-T-H motif). Active-site for autocatalytic cleavage activity residues include Ser-129 and Lys-166.

Belongs to the peptidase S24 family. As to quaternary structure, homodimer.

It carries out the reaction Hydrolysis of Ala-|-Gly bond in repressor LexA.. Represses a number of genes involved in the response to DNA damage (SOS response), including recA and lexA. In the presence of single-stranded DNA, RecA interacts with LexA causing an autocatalytic cleavage which disrupts the DNA-binding part of LexA, leading to derepression of the SOS regulon and eventually DNA repair. In Oleidesulfovibrio alaskensis (strain ATCC BAA-1058 / DSM 17464 / G20) (Desulfovibrio alaskensis), this protein is LexA repressor.